Here is a 717-residue protein sequence, read N- to C-terminus: Choline transporter-like protein 5 (717 aa).

The tract at residues M1–D24 is disordered. Residues M1 to D38 are Cytoplasmic-facing. The helical transmembrane segment at V39–A59 threads the bilayer. Topologically, residues W60–W242 are extracellular. 2 N-linked (GlcNAc...) asparagine glycosylation sites follow: N88 and N190. A helical membrane pass occupies residues Y243–L263. At R264 to F265 the chain is on the cytoplasmic side. The helical transmembrane segment at I266–I286 threads the bilayer. At W287–W325 the chain is on the extracellular side. An N-linked (GlcNAc...) asparagine glycan is attached at N314. The helical transmembrane segment at F326–L346 threads the bilayer. Residues R347–R351 lie on the Cytoplasmic side of the membrane. A helical membrane pass occupies residues V352–V372. Over Y373 to P374 the chain is Extracellular. A helical transmembrane segment spans residues A375–L395. Over A396 to N460 the chain is Cytoplasmic. A helical membrane pass occupies residues L461–G481. Over A482–S515 the chain is Extracellular. A helical transmembrane segment spans residues L516–L536. At N537–Y610 the chain is on the cytoplasmic side. The chain crosses the membrane as a helical span at residues F611 to F631. The Extracellular segment spans residues F632–Y649. Residues W650–V670 form a helical membrane-spanning segment. The Cytoplasmic segment spans residues Y671–Q717.

This sequence belongs to the CTL (choline transporter-like) family.

It localises to the cell membrane. It catalyses the reaction choline(out) + n H(+)(in) = choline(in) + n H(+)(out). Functionally, choline/H+ antiporter. In Macaca fascicularis (Crab-eating macaque), this protein is Choline transporter-like protein 5 (SLC44A5).